A 198-amino-acid polypeptide reads, in one-letter code: Dual specificity protein phosphatase 14 (198 aa).

Residues Gly26–Gly167 form the Tyrosine-protein phosphatase domain. Cys111 acts as the Phosphocysteine intermediate in catalysis.

It belongs to the protein-tyrosine phosphatase family. Non-receptor class dual specificity subfamily. In terms of assembly, interacts with CD28.

The enzyme catalyses O-phospho-L-tyrosyl-[protein] + H2O = L-tyrosyl-[protein] + phosphate. It catalyses the reaction O-phospho-L-seryl-[protein] + H2O = L-seryl-[protein] + phosphate. It carries out the reaction O-phospho-L-threonyl-[protein] + H2O = L-threonyl-[protein] + phosphate. In terms of biological role, involved in the inactivation of MAP kinases. Dephosphorylates ERK, JNK and p38 MAP-kinases. Plays a negative role in TCR signaling by dephosphorylating MAP3K7 adapter TAB1 leading to its inactivation. This chain is Dual specificity protein phosphatase 14 (DUSP14), found in Homo sapiens (Human).